The sequence spans 524 residues: Cytokinin dehydrogenase 7 (524 aa).

One can recognise an FAD-binding PCMH-type domain in the interval 58-238 (NCVKPLAVVR…TRARVLLQPA (181 aa)). 4 residues coordinate FAD: A91, G93, N94, and G95. The residue at position 96 (H96) is a Pros-8alpha-FAD histidine. FAD contacts are provided by S97, Q101, D162, T167, S173, V177, I228, Y479, S514, and Q517.

It belongs to the oxygen-dependent FAD-linked oxidoreductase family. The cofactor is FAD. As to expression, expressed in the vasculature of roots, hypocotyls, cotyledons and leaves of young seedlings. In flowers, expressed in the transmitting tissue of the gynoecium prior to pollination. Expressed in the mature embryo sac with maximum activity in the egg cell and the synergids.

It localises to the cytoplasm. The protein localises to the cytosol. The catalysed reaction is N(6)-dimethylallyladenine + A + H2O = 3-methyl-2-butenal + adenine + AH2. Its function is as follows. Catalyzes the oxidation of cytokinins, a family of N(6)-substituted adenine derivatives that are plant hormones, where the substituent is an isopentenyl group. Catalyzes in vitro the oxidation of various types of cytokinin nucleotides that are known as direct products of cytokinin biosynthesis. This is Cytokinin dehydrogenase 7 (CKX7) from Arabidopsis thaliana (Mouse-ear cress).